Consider the following 589-residue polypeptide: Transcription factor 4 (589 aa).

Disordered stretches follow at residues Met-1–Lys-124, Asp-138–Asn-163, Pro-184–Gly-239, His-254–Leu-297, Ser-384–Asn-492, and Lys-556–Met-589. Phosphoserine occurs at positions 8 and 13. Residues Gly-56–Asn-74 are compositionally biased toward polar residues. A leucine-zipper region spans residues Met-136–Tyr-157. Positions Pro-184–Ile-224 are enriched in polar residues. Low complexity predominate over residues Thr-255–Pro-266. Polar residues predominate over residues Asn-283–Asn-292. Residue Ser-290 is modified to Phosphoserine. The class A specific domain stretch occupies residues Arg-380–Pro-403. Low complexity-rich tracts occupy residues Leu-385–Gln-398 and Gly-421–Glu-430. Position 433 is a phosphoserine (Ser-433). 2 stretches are compositionally biased toward basic and acidic residues: residues Lys-445 to Ser-461 and Pro-477 to Asn-492. The region spanning Glu-486–Leu-539 is the bHLH domain.

In terms of assembly, efficient DNA binding requires dimerization with another bHLH protein. Forms homo- or heterooligomers with myogenin. Interacts with HIVEP2. Interacts with NEUROD2. Interacts with AGBL1.

It is found in the nucleus. In terms of biological role, transcription factor that binds to the immunoglobulin enhancer Mu-E5/KE5-motif. Involved in the initiation of neuronal differentiation. Activates transcription by binding to the E box (5'-CANNTG-3'). Binds to the E-box present in the somatostatin receptor 2 initiator element (SSTR2-INR) to activate transcription. Interacts with the CCAAT displacement protein (CDP2) to bind the tyrosine hydroxylase enhancer. The chain is Transcription factor 4 (Tcf4) from Rattus norvegicus (Rat).